A 635-amino-acid polypeptide reads, in one-letter code: Threonine--tRNA ligase (635 aa).

The 61-residue stretch at 1–61 folds into the TGS domain; sequence MIKITLKDGK…HKDSSLEILT (61 aa). The interval 242-532 is catalytic; that stretch reads DHRKLGKELD…LIEQYAGAFP (291 aa). Zn(2+) is bound by residues Cys333, His384, and His509.

The protein belongs to the class-II aminoacyl-tRNA synthetase family. As to quaternary structure, homodimer. The cofactor is Zn(2+).

It is found in the cytoplasm. The catalysed reaction is tRNA(Thr) + L-threonine + ATP = L-threonyl-tRNA(Thr) + AMP + diphosphate + H(+). In terms of biological role, catalyzes the attachment of threonine to tRNA(Thr) in a two-step reaction: L-threonine is first activated by ATP to form Thr-AMP and then transferred to the acceptor end of tRNA(Thr). Also edits incorrectly charged L-seryl-tRNA(Thr). In Clostridium botulinum (strain ATCC 19397 / Type A), this protein is Threonine--tRNA ligase.